The chain runs to 369 residues: tRNA-specific 2-thiouridylase MnmA (369 aa).

Residues 11 to 18 (GMSGGVDS) and Met-37 each bind ATP. The interaction with target base in tRNA stretch occupies residues 97-99 (NPD). The Nucleophile role is filled by Cys-102. An intrachain disulfide couples Cys-102 to Cys-199. ATP is bound at residue Gly-127. Residues 149–151 (KDQ) form an interaction with tRNA region. Cys-199 serves as the catalytic Cysteine persulfide intermediate. Residues 311–312 (RY) form an interaction with tRNA region.

It belongs to the MnmA/TRMU family. In terms of assembly, interacts with TusE.

Its subcellular location is the cytoplasm. It catalyses the reaction S-sulfanyl-L-cysteinyl-[protein] + uridine(34) in tRNA + AH2 + ATP = 2-thiouridine(34) in tRNA + L-cysteinyl-[protein] + A + AMP + diphosphate + H(+). Its function is as follows. Catalyzes the 2-thiolation of uridine at the wobble position (U34) of tRNA(Lys), tRNA(Glu) and tRNA(Gln), leading to the formation of s(2)U34, the first step of tRNA-mnm(5)s(2)U34 synthesis. Sulfur is provided by IscS, via a sulfur-relay system. Binds ATP and its substrate tRNAs. This Enterobacter sp. (strain 638) protein is tRNA-specific 2-thiouridylase MnmA.